We begin with the raw amino-acid sequence, 353 residues long: MNLLKTQLKGDRVLAGKEAVAELYKTGYFGRPKDDGLELSLVEAAYLQSRGKLDIELEGKLLGFRAFFEQASLRQQNFELKYIVYKDLKERGYYVQPSAADFRVYPRGSHPGKSAAKIFVHVLSERQPLSVKLLQESVASAENVHKQFILAVVDEESDLTFYEIKSASPKGEMPEPFPAVKADATFLEDRVIAWDAEASGALYSRGFYGKMLDPERLQLSLVESLYLFSRGVIVVRDRKGKIFSFDEFVEKASEIEGSFLRKYSAYKALRDSGHVVKTGFKFGTHFRVYRKVESIEKIPHSEYLVNVIPEDYEFRLPVMSGAVRLANSVRKRMLFAVEKGEEVEYLDIGRVKM.

Residues tyrosine 289, histidine 300, and lysine 331 contribute to the active site.

Belongs to the tRNA-intron endonuclease family. Archaeal long subfamily. As to quaternary structure, homodimer.

It catalyses the reaction pretRNA = a 3'-half-tRNA molecule with a 5'-OH end + a 5'-half-tRNA molecule with a 2',3'-cyclic phosphate end + an intron with a 2',3'-cyclic phosphate and a 5'-hydroxyl terminus.. Endonuclease that removes tRNA introns. Cleaves pre-tRNA at the 5'- and 3'-splice sites to release the intron. The products are an intron and two tRNA half-molecules bearing 2',3' cyclic phosphate and 5'-OH termini. Recognizes a pseudosymmetric substrate in which 2 bulged loops of 3 bases are separated by a stem of 4 bp. This is tRNA-splicing endonuclease from Methanosarcina mazei (strain ATCC BAA-159 / DSM 3647 / Goe1 / Go1 / JCM 11833 / OCM 88) (Methanosarcina frisia).